The primary structure comprises 391 residues: G-patch domain-containing protein 1 (391 aa).

The G-patch domain maps to 15–61 (KDSAAFKLMKSMGWEEGEGLGKDKQGIKGYVRVTNKQDTSGVGLDKP). Disordered stretches follow at residues 80 to 132 (VQAA…EKGK) and 212 to 307 (KASE…PAKR). Acidic residues-rich tracts occupy residues 92-102 (DDSDKEDESED) and 265-295 (NSDD…DDDK). Positions 305-312 (AKRKHDEI) match the Nuclear localization signal motif.

Strongly expressed in tissues with high cell proliferation activity that have a high demand for ribosome production such as shoot tips, leaves primordia, root tips and floral buds.

It is found in the nucleus. Its subcellular location is the nucleolus. In terms of biological role, involved in ribosome biogenesis, required for normal progression of rRNA processing. Seems to promote cell proliferation in leaves. This Arabidopsis thaliana (Mouse-ear cress) protein is G-patch domain-containing protein 1.